The chain runs to 253 residues: MANLLEKFKNRDKSLLFVPFFVSGFPDFDFLEKFLFKNKDKIDILELGVPFSDPVADGPILQEINYRAMVKGVNLNNTLDWLLDSGITKKIDVILLLYFNLIQNKLEEKLKRFKEVGIKGLVIPDLPLEEAEKLIPLFNEHNLDLILFISPTTREERIRKILDIAPSFLYCISVKGVTGERDRLPEEGVAFISRVKKETNKPLVWGFGLGSSYQINSLKGLVDGVIVGSAIGKRLLNNEDIQDYFDELYKATL.

Residues Glu-46 and Asp-57 each act as proton acceptor in the active site.

It belongs to the TrpA family. In terms of assembly, tetramer of two alpha and two beta chains.

The catalysed reaction is (1S,2R)-1-C-(indol-3-yl)glycerol 3-phosphate + L-serine = D-glyceraldehyde 3-phosphate + L-tryptophan + H2O. Its pathway is amino-acid biosynthesis; L-tryptophan biosynthesis; L-tryptophan from chorismate: step 5/5. Functionally, the alpha subunit is responsible for the aldol cleavage of indoleglycerol phosphate to indole and glyceraldehyde 3-phosphate. This Dictyoglomus thermophilum (strain ATCC 35947 / DSM 3960 / H-6-12) protein is Tryptophan synthase alpha chain.